The sequence spans 630 residues: Probable potassium transport system protein Kup (630 aa).

The next 12 helical transmembrane spans lie at 19–39 (GLIG…LYAV), 59–79 (LLSL…VLLI), 108–128 (WIIG…ATIT), 145–165 (PGLK…LFFV), 173–193 (VGGA…ALGL), 220–240 (LLAF…EALY), 255–275 (WLFF…ALVI), 284–304 (PFFF…ATIA), 345–365 (IYVP…VLGF), 374–394 (AYGI…AFVY), 405–425 (TVLV…SNVL), and 427–447 (VFDG…VMTT).

This sequence belongs to the HAK/KUP transporter (TC 2.A.72) family.

The protein resides in the cell inner membrane. It catalyses the reaction K(+)(in) + H(+)(in) = K(+)(out) + H(+)(out). Its function is as follows. Transport of potassium into the cell. Likely operates as a K(+):H(+) symporter. The protein is Probable potassium transport system protein Kup of Acidiphilium cryptum (strain JF-5).